Consider the following 66-residue polypeptide: Protein KleD (66 aa).

A DNA-binding region (H-T-H motif) is located at residues 33–52; the sequence is VAVRSGNEWQQVTKWVEPAR.

The polypeptide is Protein KleD (kleD) (Escherichia coli).